A 150-amino-acid chain; its full sequence is Large ribosomal subunit protein bL9 (150 aa).

The protein belongs to the bacterial ribosomal protein bL9 family.

Its function is as follows. Binds to the 23S rRNA. The polypeptide is Large ribosomal subunit protein bL9 (Corynebacterium glutamicum (strain ATCC 13032 / DSM 20300 / JCM 1318 / BCRC 11384 / CCUG 27702 / LMG 3730 / NBRC 12168 / NCIMB 10025 / NRRL B-2784 / 534)).